The primary structure comprises 732 residues: Conidiogenone synthase (732 aa).

The interval 1-311 is terpene cyclase; sequence MADKITDEYA…SLCVPRYCKV (311 aa). Residue aspartate 97 coordinates Mg(2+). Substrate-binding positions include aspartate 97, 169–172, asparagine 213, 217–221, and 307–308; these read RIVD, SWDKE, and RY. A DDXXD 1 motif is present at residues 97–101; it reads DALNQ. The NSE/DTE motif lies at 213 to 221; sequence NDLFSWDKE. Positions 312–732 are prenyltransferase; it reads DRNPYKDHLE…LRAMEETLQK (421 aa). The segment at 348–370 is disordered; it reads KQSELKDPSSSTYKSHFSPLEPN. 3 residues coordinate isopentenyl diphosphate: lysine 402, arginine 405, and histidine 434. Mg(2+) contacts are provided by aspartate 441 and aspartate 445. The DDXXD 2 signature appears at 441 to 445; the sequence is DDIQD. Arginine 450 contacts dimethylallyl diphosphate. Position 451 (arginine 451) interacts with isopentenyl diphosphate. Lysine 529, threonine 530, glutamine 565, asparagine 572, lysine 582, and lysine 592 together coordinate dimethylallyl diphosphate.

The protein in the N-terminal section; belongs to the terpene synthase family. In the C-terminal section; belongs to the FPP/GGPP synthase family. In terms of assembly, hexamer. The cofactor is Mg(2+).

The enzyme catalyses isopentenyl diphosphate + (2E,6E)-farnesyl diphosphate = (2E,6E,10E)-geranylgeranyl diphosphate + diphosphate. Its pathway is secondary metabolite biosynthesis; terpenoid biosynthesis. In terms of biological role, bifunctional terpene synthase; part of the gene cluster that mediates the biosynthesis of conidiogenone, a diterpene known to induce the conidiation. The bifunctional terpene synthase PchDS converts isopentenyl diphosphate (IPP) and dimethylallyl diphosphate (DMAPP) into deoxyconidiogenol. The C-terminal prenyltransferase (PT) domain of PchDS catalyzes formation of GGPP, whereas the N-terminal terpene cyclase (TC) domain catalyzes the cyclization of GGPP into deoxyconidiogenol. The cytochrome P450 monooxygenase PchP450 then catalyzes two rounds of oxidation to furnish conidiogenone. In Penicillium rubens (strain ATCC 28089 / DSM 1075 / NRRL 1951 / Wisconsin 54-1255) (Penicillium chrysogenum), this protein is Conidiogenone synthase.